A 448-amino-acid chain; its full sequence is Trigger factor (448 aa).

The PPIase FKBP-type domain maps to 172–257 (GDRVTVDFVG…MKKIEWPHLP (86 aa)).

The protein belongs to the FKBP-type PPIase family. Tig subfamily.

The protein resides in the cytoplasm. The catalysed reaction is [protein]-peptidylproline (omega=180) = [protein]-peptidylproline (omega=0). Its function is as follows. Involved in protein export. Acts as a chaperone by maintaining the newly synthesized protein in an open conformation. Functions as a peptidyl-prolyl cis-trans isomerase. In Burkholderia ambifaria (strain ATCC BAA-244 / DSM 16087 / CCUG 44356 / LMG 19182 / AMMD) (Burkholderia cepacia (strain AMMD)), this protein is Trigger factor.